Consider the following 351-residue polypeptide: Peptide chain release factor 1 (351 aa).

Residue Gln233 is modified to N5-methylglutamine.

This sequence belongs to the prokaryotic/mitochondrial release factor family. In terms of processing, methylated by PrmC. Methylation increases the termination efficiency of RF1.

Its subcellular location is the cytoplasm. Peptide chain release factor 1 directs the termination of translation in response to the peptide chain termination codons UAG and UAA. The protein is Peptide chain release factor 1 (prfA) of Treponema pallidum (strain Nichols).